A 238-amino-acid polypeptide reads, in one-letter code: Valine-rich protein (238 aa).

An N-terminal signal peptide occupies residues 1–16 (MQAVLLVVALFGAALA).

Prismatic layer of shell (at protein level). Expressed primarily in the mantle with highest level in the mantle edge and lower level in the mantle pallium.

It is found in the secreted. The protein is Valine-rich protein of Pinctada maxima (Silver-lipped pearl oyster).